We begin with the raw amino-acid sequence, 199 residues long: Tumor protein p53-inducible nuclear protein 2 (199 aa).

An LIR motif is present at residues 26 to 41 (VSEEDEVDGWLIIDLQ). Disordered regions lie at residues 41–69 (QDSY…LMDE), 117–153 (LESG…LHHA), and 173–199 (LQRA…ARES). Pro residues predominate over residues 47–64 (PPDPRASPAPAGRPPPAP). Residue Ser-136 is modified to Phosphoserine.

Interacts with VMP1, GABARAP, GABARAPL1, GABARAPL2, MAP1LC3A, MAP1LC3B, MAP1LC3C and THRA. As to expression, abundantly expressed in skeletal muscle and heart and expression is highly repressed in muscle from obese diabetic rats.

It localises to the cytoplasm. Its subcellular location is the cytosol. It is found in the nucleus. The protein localises to the PML body. The protein resides in the cytoplasmic vesicle. It localises to the autophagosome. Its function is as follows. Dual regulator of transcription and autophagy. Positively regulates autophagy and is required for autophagosome formation and processing. May act as a scaffold protein that recruits MAP1LC3A, GABARAP and GABARAPL2 and brings them to the autophagosome membrane by interacting with VMP1 where, in cooperation with the BECN1-PI3-kinase class III complex, they trigger autophagosome development. Acts as a transcriptional activator of THRA. The sequence is that of Tumor protein p53-inducible nuclear protein 2 (Tp53inp2) from Rattus norvegicus (Rat).